Consider the following 113-residue polypeptide: MESSAKLSLARLSPRKTRTVADLVRGKGIQQALNTLSFLPNPSAQILLKLLKSAVANAEQKGVNDIDKLFVKTIFVDGGAVLKRFVPRAMGRASKIRKPTSHISVVLSDTKTR.

The protein belongs to the universal ribosomal protein uL22 family. In terms of assembly, part of the 50S ribosomal subunit.

Functionally, this protein binds specifically to 23S rRNA; its binding is stimulated by other ribosomal proteins, e.g. L4, L17, and L20. It is important during the early stages of 50S assembly. It makes multiple contacts with different domains of the 23S rRNA in the assembled 50S subunit and ribosome. In terms of biological role, the globular domain of the protein is located near the polypeptide exit tunnel on the outside of the subunit, while an extended beta-hairpin is found that lines the wall of the exit tunnel in the center of the 70S ribosome. In Trichlorobacter lovleyi (strain ATCC BAA-1151 / DSM 17278 / SZ) (Geobacter lovleyi), this protein is Large ribosomal subunit protein uL22.